The primary structure comprises 248 residues: DNA polymerase sliding clamp (248 aa).

The protein belongs to the PCNA family. In terms of assembly, homotrimer. The subunits circularize to form a toroid; DNA passes through its center. Replication factor C (RFC) is required to load the toroid on the DNA.

Functionally, sliding clamp subunit that acts as a moving platform for DNA processing. Responsible for tethering the catalytic subunit of DNA polymerase and other proteins to DNA during high-speed replication. The protein is DNA polymerase sliding clamp of Cenarchaeum symbiosum (strain A).